A 118-amino-acid chain; its full sequence is ATP synthase subunit c (118 aa).

A run of 2 helical transmembrane segments spans residues 34-54 and 88-108; these read AIFA…GAVG and MAMA…LIFA.

The protein belongs to the ATPase C chain family. As to quaternary structure, F-type ATPases have 2 components, F(1) - the catalytic core - and F(0) - the membrane proton channel. F(1) has five subunits: alpha(3), beta(3), gamma(1), delta(1), epsilon(1). F(0) has three main subunits: a(1), b(2) and c(10-14). The alpha and beta chains form an alternating ring which encloses part of the gamma chain. F(1) is attached to F(0) by a central stalk formed by the gamma and epsilon chains, while a peripheral stalk is formed by the delta and b chains.

The protein localises to the cell inner membrane. Functionally, f(1)F(0) ATP synthase produces ATP from ADP in the presence of a proton or sodium gradient. F-type ATPases consist of two structural domains, F(1) containing the extramembraneous catalytic core and F(0) containing the membrane proton channel, linked together by a central stalk and a peripheral stalk. During catalysis, ATP synthesis in the catalytic domain of F(1) is coupled via a rotary mechanism of the central stalk subunits to proton translocation. Key component of the F(0) channel; it plays a direct role in translocation across the membrane. A homomeric c-ring of between 10-14 subunits forms the central stalk rotor element with the F(1) delta and epsilon subunits. The polypeptide is ATP synthase subunit c (Syntrophus aciditrophicus (strain SB)).